The primary structure comprises 248 residues: Neurotrophic factor BDNF precursor form (248 aa).

Positions 1 to 18 are cleaved as a signal peptide; the sequence is MTILFLTMVISYFSCMKA. The propeptide occupies 19–129; that stretch reads APMKEANVRG…AANMSMRVRR (111 aa). N122 is a glycosylation site (N-linked (GlcNAc...) asparagine). 3 disulfide bridges follow: C142/C209, C187/C238, and C197/C240.

Belongs to the NGF-beta family. As to quaternary structure, monomers and homodimers. Binds to NTRK2/TRKB. Can form heterodimers with other neurotrophin family members, such as NTF3 and NTF4 (in vitro), but the physiological relevance of this is not clear. BDNF precursor form: interacts with the heterodimer formed by NGFR and SORCS2. Mature BDNF has much lower affinity for the heterodimer formed by NGFR and SORCS2. Post-translationally, N-glycosylated and glycosulfated, contrary to mature BDNF. Mature BDNF is produced by proteolytic removal of the propeptide, catalyzed by a FURIN family member. In addition, the precursor form is proteolytically cleaved within the propeptide, but this is not an obligatory intermediate for the production of mature BDNF. Can be converted into mature BDNF by plasmin (PLG).

It localises to the secreted. Its function is as follows. Important signaling molecule that activates signaling cascades downstream of NTRK2. During development, promotes the survival and differentiation of selected neuronal populations of the peripheral and central nervous systems. Participates in axonal growth, pathfinding and in the modulation of dendritic growth and morphology. Major regulator of synaptic transmission and plasticity at adult synapses in many regions of the CNS. The versatility of BDNF is emphasized by its contribution to a range of adaptive neuronal responses including long-term potentiation (LTP), long-term depression (LTD), certain forms of short-term synaptic plasticity, as well as homeostatic regulation of intrinsic neuronal excitability. Functionally, important signaling molecule that activates signaling cascades downstream of NTRK2. Activates signaling cascades via the heterodimeric receptor formed by NGFR and SORCS2. Signaling via NGFR and SORCS2 plays a role in synaptic plasticity and long-term depression (LTD). Binding to NGFR and SORCS2 promotes neuronal apoptosis. Promotes neuronal growth cone collapse. The protein is Neurotrophic factor BDNF precursor form (BDNF) of Lipotes vexillifer (Yangtze river dolphin).